Reading from the N-terminus, the 324-residue chain is 4-hydroxybenzoyl-CoA reductase subunit beta (324 aa).

Residues 2–217 (NILTDFRTHR…AAIEVPPTGA (216 aa)) enclose the FAD-binding PCMH-type domain. FAD contacts are provided by residues 29–36 (PLGAGTDL), threonine 111, asparagine 115, and glutamine 118. [4Fe-4S] cluster-binding residues include cysteine 122, cysteine 138, cysteine 146, and cysteine 155. FAD is bound by residues aspartate 162 and lysine 224.

As to quaternary structure, heterohexamer of two alpha, two beta and two gamma subunits. Requires FAD as cofactor. [4Fe-4S] cluster is required as a cofactor.

The catalysed reaction is oxidized 2[4Fe-4S]-[ferredoxin] + benzoyl-CoA + H2O = 4-hydroxybenzoyl-CoA + reduced 2[4Fe-4S]-[ferredoxin] + 2 H(+). Inactivated by low concentrations of cyanide in vitro. Its function is as follows. Component of a complex that catalyzes the reductive dehydroxylation of 4-hydroxybenzoyl-CoA to benzoyl-CoA. Reaction is not reversible. Is a key enzyme in the anaerobic degradation of phenolic compounds. The sequence is that of 4-hydroxybenzoyl-CoA reductase subunit beta (hcrB) from Thauera aromatica.